The sequence spans 115 residues: Protein V2 (115 aa).

Belongs to the geminiviridae protein AV2/V2 family. Interacts with host SGS3.

The protein resides in the host cytoplasm. It is found in the host perinuclear region. Its function is as follows. Through its interaction with host SGS3, acts as a suppressor of RNA-mediated gene silencing, also known as post-transcriptional gene silencing (PTGS), a mechanism of plant viral defense that limits the accumulation of viral RNAs. The protein is Protein V2 of Tomato yellow leaf curl Sardinia virus (TYLCSV).